Consider the following 427-residue polypeptide: Peptidase B (427 aa).

2 residues coordinate Mn(2+): Lys-195 and Asp-200. Residue Lys-207 is part of the active site. Asp-218, Asp-277, and Glu-279 together coordinate Mn(2+). Residue Arg-281 is part of the active site.

Belongs to the peptidase M17 family. In terms of assembly, homohexamer. Mn(2+) is required as a cofactor.

It localises to the cytoplasm. The enzyme catalyses Release of an N-terminal amino acid, Xaa, from a peptide or arylamide. Xaa is preferably Glu or Asp but may be other amino acids, including Leu, Met, His, Cys and Gln.. Functionally, probably plays an important role in intracellular peptide degradation. The chain is Peptidase B from Salmonella agona (strain SL483).